The following is a 182-amino-acid chain: ATP synthase subunit delta (182 aa).

The protein belongs to the ATPase delta chain family. As to quaternary structure, F-type ATPases have 2 components, F(1) - the catalytic core - and F(0) - the membrane proton channel. F(1) has five subunits: alpha(3), beta(3), gamma(1), delta(1), epsilon(1). F(0) has three main subunits: a(1), b(2) and c(10-14). The alpha and beta chains form an alternating ring which encloses part of the gamma chain. F(1) is attached to F(0) by a central stalk formed by the gamma and epsilon chains, while a peripheral stalk is formed by the delta and b chains.

It localises to the cell inner membrane. Functionally, f(1)F(0) ATP synthase produces ATP from ADP in the presence of a proton or sodium gradient. F-type ATPases consist of two structural domains, F(1) containing the extramembraneous catalytic core and F(0) containing the membrane proton channel, linked together by a central stalk and a peripheral stalk. During catalysis, ATP synthesis in the catalytic domain of F(1) is coupled via a rotary mechanism of the central stalk subunits to proton translocation. This protein is part of the stalk that links CF(0) to CF(1). It either transmits conformational changes from CF(0) to CF(1) or is implicated in proton conduction. The polypeptide is ATP synthase subunit delta (Cytophaga hutchinsonii (strain ATCC 33406 / DSM 1761 / CIP 103989 / NBRC 15051 / NCIMB 9469 / D465)).